The sequence spans 706 residues: Vitamin B12-dependent ribonucleoside-diphosphate reductase (706 aa).

The region spanning 21–109 (AKVRRRDGTL…IYRQRRAELR (89 aa)) is the ATP-cone domain. Residues Ser-191, 206-207 (GC), Gly-235, 389-393 (NPCGE), and 534-538 (PTGTI) contribute to the substrate site. Cys-207 and Cys-402 are joined by a disulfide. Catalysis depends on Asn-389, which acts as the Proton acceptor. Catalysis depends on Cys-391, which acts as the Cysteine radical intermediate. The active-site Proton acceptor is the Glu-393.

The protein belongs to the ribonucleoside diphosphate reductase class-2 family. It depends on adenosylcob(III)alamin as a cofactor.

The enzyme catalyses a 2'-deoxyribonucleoside 5'-diphosphate + [thioredoxin]-disulfide + H2O = a ribonucleoside 5'-diphosphate + [thioredoxin]-dithiol. Functionally, provides the precursors necessary for DNA synthesis. Catalyzes the biosynthesis of deoxyribonucleotides from the corresponding ribonucleotides. The chain is Vitamin B12-dependent ribonucleoside-diphosphate reductase (nrdZ) from Mycobacterium tuberculosis (strain ATCC 25618 / H37Rv).